We begin with the raw amino-acid sequence, 645 residues long: 1,4-alpha-glucan branching enzyme GlgB (645 aa).

Aspartate 309 functions as the Nucleophile in the catalytic mechanism. The Proton donor role is filled by glutamate 352. The tract at residues 619-645 is disordered; sequence VKTRKGSKKQDGSKTKVRSNVTSRGKR. Residues 636-645 show a composition bias toward polar residues; sequence RSNVTSRGKR.

It belongs to the glycosyl hydrolase 13 family. GlgB subfamily. In terms of assembly, monomer.

The catalysed reaction is Transfers a segment of a (1-&gt;4)-alpha-D-glucan chain to a primary hydroxy group in a similar glucan chain.. Its pathway is glycan biosynthesis; glycogen biosynthesis. In terms of biological role, catalyzes the formation of the alpha-1,6-glucosidic linkages in glycogen by scission of a 1,4-alpha-linked oligosaccharide from growing alpha-1,4-glucan chains and the subsequent attachment of the oligosaccharide to the alpha-1,6 position. The sequence is that of 1,4-alpha-glucan branching enzyme GlgB from Bacillus cereus (strain G9842).